Reading from the N-terminus, the 65-residue chain is UPF0337 protein gbs1203 (65 aa).

The span at 1–12 (MSEEKFDAKVDK) shows a compositional bias: basic and acidic residues. The tract at residues 1 to 29 (MSEEKFDAKVDKVSGSVKESVGKLTGDKE) is disordered.

This sequence belongs to the UPF0337 (CsbD) family.

The sequence is that of UPF0337 protein gbs1203 from Streptococcus agalactiae serotype III (strain NEM316).